A 297-amino-acid polypeptide reads, in one-letter code: Phosphoribosylaminoimidazole-succinocarboxamide synthase (297 aa).

Belongs to the SAICAR synthetase family.

The catalysed reaction is 5-amino-1-(5-phospho-D-ribosyl)imidazole-4-carboxylate + L-aspartate + ATP = (2S)-2-[5-amino-1-(5-phospho-beta-D-ribosyl)imidazole-4-carboxamido]succinate + ADP + phosphate + 2 H(+). It functions in the pathway purine metabolism; IMP biosynthesis via de novo pathway; 5-amino-1-(5-phospho-D-ribosyl)imidazole-4-carboxamide from 5-amino-1-(5-phospho-D-ribosyl)imidazole-4-carboxylate: step 1/2. The polypeptide is Phosphoribosylaminoimidazole-succinocarboxamide synthase (Rhodococcus erythropolis (strain PR4 / NBRC 100887)).